Consider the following 227-residue polypeptide: MTNNLSGYRNKFVRVKTSKKRTVSSSNWLRRQLNDPYVAKARIDGFRSRAAYKLLEIHEKFKLFTPNMKVVDLGAAPGGWSQVASKLIKASDNNLNNKIISIDVLEIEHVAGVEFVQKDFFEADTEELIIQALDGRADIVMSDMASNTIGHKATDHIRTLLLCEQAFEFALKVLKPSGHFIAKIFRGGAENELLHKVKREFKTVKHFKPSSSRSESTEIYLVALNKK.

Positions 78, 80, 103, 119, and 143 each coordinate S-adenosyl-L-methionine. The active-site Proton acceptor is the K183.

It belongs to the class I-like SAM-binding methyltransferase superfamily. RNA methyltransferase RlmE family.

The protein localises to the cytoplasm. It catalyses the reaction uridine(2552) in 23S rRNA + S-adenosyl-L-methionine = 2'-O-methyluridine(2552) in 23S rRNA + S-adenosyl-L-homocysteine + H(+). Its function is as follows. Specifically methylates the uridine in position 2552 of 23S rRNA at the 2'-O position of the ribose in the fully assembled 50S ribosomal subunit. In Rickettsia rickettsii (strain Iowa), this protein is Ribosomal RNA large subunit methyltransferase E.